We begin with the raw amino-acid sequence, 54 residues long: Large ribosomal subunit protein bL32 (54 aa).

The tract at residues 1 to 26 (MAVQKNKPTRSKRGMRRSHDSLTAPH) is disordered. Over residues 7–16 (KPTRSKRGMR) the composition is skewed to basic residues.

It belongs to the bacterial ribosomal protein bL32 family.

The polypeptide is Large ribosomal subunit protein bL32 (Buchnera aphidicola subsp. Acyrthosiphon pisum (strain 5A)).